The following is a 1176-amino-acid chain: 3-hydroxy-3-methylglutaryl-coenzyme A reductase (1176 aa).

At 1–34 (MSLPNHSGSSAFKSFSYIVGTGIKRAAKLSTRNP) the chain is on the cytoplasmic side. The chain crosses the membrane as a helical span at residues 35-55 (IEMIVVVLILSSFSYFYLFNL). The Lumenal segment spans residues 56 to 299 (ARTSDIFSGT…VKELIDLADN (244 aa)). Residues Asn-224 and Asn-238 are each glycosylated (N-linked (GlcNAc...) asparagine). Residues 300-320 (IDIIVILVGYIMMIATFISLY) form a helical membrane-spanning segment. One can recognise an SSD domain in the interval 301–465 (DIIVILVGYI…FTWYTAVLAL (165 aa)). At 321–330 (VNMRAMGSRY) the chain is on the cytoplasmic side. Residues 331 to 351 (TLATAVVFNGFFSFMLALLTV) form a helical membrane-spanning segment. Over 352 to 355 (RALG) the chain is Lumenal. A helical membrane pass occupies residues 356 to 376 (VDVYPVVLAEAIPFLAVTIGF). At 377 to 422 (ERPFKLTKRVFQFSKETPLTKQEIRTTIMRAVDTVALPIARDCFME) the chain is on the cytoplasmic side. The helical transmembrane segment at 423-443 (IIVLVLGAKSGISGLEEFCLL) threads the bilayer. Ser-444 is a topological domain (lumenal). A helical membrane pass occupies residues 445-465 (AILLAYDFIIMFTWYTAVLAL). The Cytoplasmic segment spans residues 466–524 (KLELLRIREINGISADDIKKGTKKSTGYIRRTVIKAFSDDHAAGANTANQKADGPIIGR). A helical membrane pass occupies residues 525-545 (VKLLMIVGFVVMHIFKFCSAF). Residues 546 to 622 (QSVGPQVNIT…DTYAVYIQHP (77 aa)) are Lumenal-facing. N-linked (GlcNAc...) asparagine glycans are attached at residues Asn-553 and Asn-596. Residues 623 to 643 (VISKWLTIALFVSLFLNTYLF) traverse the membrane as a helical segment. Residues 644–1176 (NVAKQPKQIV…GTEPGTCIKS (533 aa)) are Cytoplasmic-facing. The disordered stretch occupies residues 699–724 (PNHKRSHNHHHSHSHSHNHHSNHHQS). Basic residues predominate over residues 700-721 (NHKRSHNHHHSHSHSHNHHSNH). Glu-841 functions as the Charge relay system in the catalytic mechanism. 847–853 (STARGCK) is a CoA binding site. NADP(+) is bound by residues 907–909 (SRF) and 934–942 (DAMGMNMIS). Residue Lys-972 is the Charge relay system of the active site. 1001–1003 (VLK) is a binding site for CoA. Asp-1048 acts as the Charge relay system in catalysis. 1145–1146 (AH) provides a ligand contact to CoA. His-1146 acts as the Proton donor in catalysis. Position 1150-1151 (1150-1151 (NR)) interacts with NADP(+). Positions 1153-1176 (TQAPTITSGPAPSTGTEPGTCIKS) are disordered.

This sequence belongs to the HMG-CoA reductase family.

It localises to the endoplasmic reticulum membrane. The catalysed reaction is (R)-mevalonate + 2 NADP(+) + CoA = (3S)-3-hydroxy-3-methylglutaryl-CoA + 2 NADPH + 2 H(+). Its pathway is metabolic intermediate biosynthesis; (R)-mevalonate biosynthesis; (R)-mevalonate from acetyl-CoA: step 3/3. Functionally, HMG-CoA reductase; part of the first module of ergosterol biosynthesis pathway that includes the early steps of the pathway, conserved across all eukaryotes, and which results in the formation of mevalonate from acetyl-coenzyme A (acetyl-CoA). In this module, the cytosolic acetyl-CoA acetyltransferase catalyzes the formation of acetoacetyl-CoA. The hydroxymethylglutaryl-CoA synthase then condenses acetyl-CoA with acetoacetyl-CoA to form HMG-CoA. The rate-limiting step of the early module is the reduction to mevalonate by the 3-hydroxy-3-methylglutaryl-coenzyme A (HMG-CoA) reductase hmgA. The protein is 3-hydroxy-3-methylglutaryl-coenzyme A reductase of Phycomyces blakesleeanus (strain ATCC 8743b / DSM 1359 / FGSC 10004 / NBRC 33097 / NRRL 1555).